An 828-amino-acid polypeptide reads, in one-letter code: Class I hydrophobin hum3 (828 aa).

The N-terminal stretch at 1–22 (MKYLQFLAAVAAVSAFSGPVLA) is a signal peptide. Residues Asn-156, Asn-222, and Asn-738 are each glycosylated (N-linked (GlcNAc...) asparagine). 4 disulfides stabilise this stretch: Cys-750-Cys-808, Cys-757-Cys-802, Cys-758-Cys-788, and Cys-809-Cys-822. A glycan (N-linked (GlcNAc...) asparagine) is linked at Asn-811.

This sequence in the C-terminal section; belongs to the fungal hydrophobin family. Self-assembles to form functional amyloid fibrils called rodlets. Self-assembly into fibrillar rodlets occurs spontaneously at hydrophobic:hydrophilic interfaces and the rodlets further associate laterally to form amphipathic monolayers. Hum3 is an atypical hydrophobin that consists in a repetitive repellent-like region that spans 578 aa which is separated from a hydrophobin-like domain by a spacer region containing three possible kex2 processing sites. The repetitive region contains 17 amphipathic repeats of 31-36 aa each of them with a C-terminal putative kex2 processing motif.

It is found in the secreted. The protein localises to the cell wall. In terms of biological role, aerial growth, conidiation, and dispersal of filamentous fungi in the environment rely upon a capability of their secreting small amphipathic proteins called hydrophobins (HPBs) with low sequence identity. Class I can self-assemble into an outermost layer of rodlet bundles on aerial cell surfaces, conferring cellular hydrophobicity that supports fungal growth, development and dispersal; whereas Class II form highly ordered films at water-air interfaces through intermolecular interactions but contribute nothing to the rodlet structure. Atypical class I hydrophobin that is preceded by a signal sequence and 17 imperfect repeats. The repeated peptides might function as repellents whereas the class I hydrophobin seems not to be crucial for the formation of aerial hyphae. Hydrophobins of Mycosarcoma maydis have been functionally replaced, at least partially, by repellents. Hum3 and rsp1 together are pathogenicity proteins that share an essential function in early stages of the infection. This chain is Class I hydrophobin hum3, found in Mycosarcoma maydis (Corn smut fungus).